The primary structure comprises 114 residues: BolA-like protein DDB_G0274169 (114 aa).

Polar residues predominate over residues Thr-88 to Ile-98. The interval Thr-88–Lys-114 is disordered.

It belongs to the BolA/IbaG family.

The protein is BolA-like protein DDB_G0274169 of Dictyostelium discoideum (Social amoeba).